The primary structure comprises 651 residues: Aspartate--tRNA ligase, mitochondrial (651 aa).

The N-terminal 44 residues, 1 to 44 (MFCWLSRLCGELSTPTRRTTQLIWSSAARSMVLSSQRIPELSSF), are a transit peptide targeting the mitochondrion. Position 216 is a phosphothreonine (threonine 216). Residue serine 239 is modified to Phosphoserine. Residues 241–244 (QQFK) are aspartate. Residue arginine 263 coordinates L-aspartate. Position 263–265 (263–265 (RDE)) interacts with ATP. Lysine 379 bears the N6-acetyllysine mark. Glutamate 532 lines the ATP pocket. Arginine 539 serves as a coordination point for L-aspartate. 581-584 (GLDR) is a binding site for ATP.

It belongs to the class-II aminoacyl-tRNA synthetase family. Type 1 subfamily. As to quaternary structure, homodimer.

The protein resides in the mitochondrion matrix. It localises to the mitochondrion membrane. The enzyme catalyses tRNA(Asp) + L-aspartate + ATP = L-aspartyl-tRNA(Asp) + AMP + diphosphate. Catalyzes the attachment of aspartate to tRNA(Asp) in a two-step reaction: aspartate is first activated by ATP to form Asp-AMP and then transferred to the acceptor end of tRNA(Asp). This Bos taurus (Bovine) protein is Aspartate--tRNA ligase, mitochondrial (DARS2).